Reading from the N-terminus, the 338-residue chain is RNA 3'-terminal phosphate cyclase (338 aa).

ATP-binding positions include Gln-103 and 283 to 287; that span reads YLADQ. The active-site Tele-AMP-histidine intermediate is His-308.

It belongs to the RNA 3'-terminal cyclase family. Type 1 subfamily.

The protein localises to the cytoplasm. It catalyses the reaction a 3'-end 3'-phospho-ribonucleotide-RNA + ATP = a 3'-end 2',3'-cyclophospho-ribonucleotide-RNA + AMP + diphosphate. Functionally, catalyzes the conversion of 3'-phosphate to a 2',3'-cyclic phosphodiester at the end of RNA. The mechanism of action of the enzyme occurs in 3 steps: (A) adenylation of the enzyme by ATP; (B) transfer of adenylate to an RNA-N3'P to produce RNA-N3'PP5'A; (C) and attack of the adjacent 2'-hydroxyl on the 3'-phosphorus in the diester linkage to produce the cyclic end product. The biological role of this enzyme is unknown but it is likely to function in some aspects of cellular RNA processing. This is RNA 3'-terminal phosphate cyclase from Escherichia coli O6:H1 (strain CFT073 / ATCC 700928 / UPEC).